We begin with the raw amino-acid sequence, 385 residues long: Phospho-N-acetylmuramoyl-pentapeptide-transferase (385 aa).

The next 10 membrane-spanning stretches (helical) occupy residues 23 to 43 (FITVRAALASITALGIALGAG), 79 to 99 (MGGIIILLSVGGATLLWGAVA), 103 to 123 (VWLSLVAMGGLGVVGFADDYV), 135 to 155 (AWYKVAGQVAVGLFVGSVLYF), 186 to 206 (LGVDLGWLVYLPVVVFIVTAV), 218 to 238 (GLTTGVTAFVSLGLVALVYVS), 258 to 278 (LTVFVAAVTAACFGFLWYNGY), 282 to 302 (VFMGDTGALALGGAVGSTILM), 307 to 327 (LLLPLLGIVYFAEALSVIVQT), and 362 to 382 (KIVTRFWIVTAITVIAALLIL).

It belongs to the glycosyltransferase 4 family. MraY subfamily. Mg(2+) serves as cofactor.

Its subcellular location is the cell inner membrane. It catalyses the reaction UDP-N-acetyl-alpha-D-muramoyl-L-alanyl-gamma-D-glutamyl-meso-2,6-diaminopimeloyl-D-alanyl-D-alanine + di-trans,octa-cis-undecaprenyl phosphate = di-trans,octa-cis-undecaprenyl diphospho-N-acetyl-alpha-D-muramoyl-L-alanyl-D-glutamyl-meso-2,6-diaminopimeloyl-D-alanyl-D-alanine + UMP. Its pathway is cell wall biogenesis; peptidoglycan biosynthesis. Its function is as follows. Catalyzes the initial step of the lipid cycle reactions in the biosynthesis of the cell wall peptidoglycan: transfers peptidoglycan precursor phospho-MurNAc-pentapeptide from UDP-MurNAc-pentapeptide onto the lipid carrier undecaprenyl phosphate, yielding undecaprenyl-pyrophosphoryl-MurNAc-pentapeptide, known as lipid I. This chain is Phospho-N-acetylmuramoyl-pentapeptide-transferase, found in Salinibacter ruber (strain DSM 13855 / M31).